We begin with the raw amino-acid sequence, 310 residues long: tRNA-cytidine(32) 2-sulfurtransferase (310 aa).

Positions 45 to 50 (SGGKDS) match the PP-loop motif motif. Residues C120, C123, and C211 each contribute to the [4Fe-4S] cluster site.

It belongs to the TtcA family. As to quaternary structure, homodimer. It depends on Mg(2+) as a cofactor. The cofactor is [4Fe-4S] cluster.

The protein resides in the cytoplasm. The enzyme catalyses cytidine(32) in tRNA + S-sulfanyl-L-cysteinyl-[cysteine desulfurase] + AH2 + ATP = 2-thiocytidine(32) in tRNA + L-cysteinyl-[cysteine desulfurase] + A + AMP + diphosphate + H(+). It functions in the pathway tRNA modification. Its function is as follows. Catalyzes the ATP-dependent 2-thiolation of cytidine in position 32 of tRNA, to form 2-thiocytidine (s(2)C32). The sulfur atoms are provided by the cysteine/cysteine desulfurase (IscS) system. This Shewanella baltica (strain OS155 / ATCC BAA-1091) protein is tRNA-cytidine(32) 2-sulfurtransferase.